We begin with the raw amino-acid sequence, 254 residues long: Imidazole glycerol phosphate synthase subunit HisF (254 aa).

Residues aspartate 11 and aspartate 130 contribute to the active site.

This sequence belongs to the HisA/HisF family. Heterodimer of HisH and HisF.

It localises to the cytoplasm. It catalyses the reaction 5-[(5-phospho-1-deoxy-D-ribulos-1-ylimino)methylamino]-1-(5-phospho-beta-D-ribosyl)imidazole-4-carboxamide + L-glutamine = D-erythro-1-(imidazol-4-yl)glycerol 3-phosphate + 5-amino-1-(5-phospho-beta-D-ribosyl)imidazole-4-carboxamide + L-glutamate + H(+). It participates in amino-acid biosynthesis; L-histidine biosynthesis; L-histidine from 5-phospho-alpha-D-ribose 1-diphosphate: step 5/9. Its function is as follows. IGPS catalyzes the conversion of PRFAR and glutamine to IGP, AICAR and glutamate. The HisF subunit catalyzes the cyclization activity that produces IGP and AICAR from PRFAR using the ammonia provided by the HisH subunit. The polypeptide is Imidazole glycerol phosphate synthase subunit HisF (Microcystis aeruginosa (strain NIES-843 / IAM M-2473)).